The primary structure comprises 250 residues: tRNA (guanine-N(1)-)-methyltransferase (250 aa).

Residues G112 and 132–137 (IGDFVL) contribute to the S-adenosyl-L-methionine site.

It belongs to the RNA methyltransferase TrmD family. Homodimer.

The protein resides in the cytoplasm. The enzyme catalyses guanosine(37) in tRNA + S-adenosyl-L-methionine = N(1)-methylguanosine(37) in tRNA + S-adenosyl-L-homocysteine + H(+). In terms of biological role, specifically methylates guanosine-37 in various tRNAs. The polypeptide is tRNA (guanine-N(1)-)-methyltransferase (Marinomonas sp. (strain MWYL1)).